We begin with the raw amino-acid sequence, 26 residues long: PRKCH upstream open reading frame 2 (26 aa).

Interacts with protein kinase C eta as well as other protein kinases including PRKCD, PRKCQ and PRKCE but not with PRKCG or PRKCZ; the interactions lead to inhibition of kinase activity.

Its function is as follows. Product of an upstream open reading frame (ORF) of PRKCH which regulates translation of the downstream protein kinase C eta (PKC-eta) ORF. Functions as a repressive element that maintains low basal levels of PKC-eta in growing cells but enhances its expression during stress conditions induced by amino acid starvation in a EIF2AK4/GCN2-dependent manner. In addition to its role in regulating PKC-eta translation, also inhibits the kinase activity of PKC-eta as well as other protein kinases including PRKCD, PRKCQ and PRKCE but not PRKCA, PRKCG or PRKCZ. This is PRKCH upstream open reading frame 2 from Homo sapiens (Human).